A 166-amino-acid chain; its full sequence is tRNA-acetylating toxin (166 aa).

A disordered region spans residues 1 to 22 (MSGYSAPRRISDADDVTSFSSG). The N-acetyltransferase domain occupies 1–162 (MSGYSAPRRI…LMLLMKDARA (162 aa)). The active site involves Tyr-138.

The protein belongs to the acetyltransferase family. GNAT subfamily. As to quaternary structure, homodimer, forms a complex with cognate antitoxin TacA.

The catalysed reaction is glycyl-tRNA(Gly) + acetyl-CoA = N-acetylglycyl-tRNA(Gly) + CoA + H(+). Toxic component of a type II toxin-antitoxin (TA) system. Overexpression of this gene alone in M.smegmatis inhibits growth, while overexpression of the tacA-tacT operon does not. Acetylates glycyl-tRNA(Gly) but not other tRNAs, blocks in vitro translation in the presence, but not absence, of acetyl-coenzyme A. Peptidyl-tRNA hydrolase (pth) counteracts the product of this enzyme in vitro. Neutralized by cognate antitoxin TacA. Does not seem to be active in laboratory growth conditions. Its function is as follows. TacA-TacT both represses and derepresses expression of its own operon. This Mycobacterium tuberculosis (strain ATCC 25618 / H37Rv) protein is tRNA-acetylating toxin.